The primary structure comprises 147 residues: uncharacterized protein (147 aa).

The disordered stretch occupies residues 30-102 (GRCEQVALSS…TPPTRPESIF (73 aa)). Polar residues predominate over residues 62–71 (RPSTGETFVQ).

This is an uncharacterized protein from Homo sapiens (Human).